The primary structure comprises 213 residues: Charged multivesicular body protein 2b (213 aa).

N-acetylalanine is present on Ala-2. Residues 25–55 are a coiled coil; sequence QRAIIRDRAALEKQEKQLELEIKKMAKIGNK. A disordered region spans residues 178–202; that stretch reads MAKAPSAARSLPSASTSKSTISDEE. Positions 179–194 are enriched in low complexity; the sequence is AKAPSAARSLPSASTS. Ser-199 is subject to Phosphoserine. Positions 201-211 match the MIT-interacting motif motif; it reads EEIERQLKALG.

This sequence belongs to the SNF7 family. Probable core component of the endosomal sorting required for transport complex III (ESCRT-III). ESCRT-III components are thought to multimerize to form a flat lattice on the perimeter membrane of the endosome. Several assembly forms of ESCRT-III may exist that interact and act sequentially. Interacts with CHMP2A. Interacts with VPS4A. Interacts with VPS4B; the interaction is direct.

It localises to the cytoplasm. The protein localises to the cytosol. The protein resides in the late endosome membrane. In terms of biological role, probable core component of the endosomal sorting required for transport complex III (ESCRT-III) which is involved in multivesicular bodies (MVBs) formation and sorting of endosomal cargo proteins into MVBs. MVBs contain intraluminal vesicles (ILVs) that are generated by invagination and scission from the limiting membrane of the endosome and mostly are delivered to lysosomes enabling degradation of membrane proteins, such as stimulated growth factor receptors, lysosomal enzymes and lipids. The MVB pathway appears to require the sequential function of ESCRT-O, -I,-II and -III complexes. ESCRT-III proteins mostly dissociate from the invaginating membrane before the ILV is released. The ESCRT machinery also functions in topologically equivalent membrane fission events, such as the terminal stages of cytokinesis and the budding of enveloped viruses (lentiviruses). ESCRT-III proteins are believed to mediate the necessary vesicle extrusion and/or membrane fission activities, possibly in conjunction with the AAA ATPase VPS4. This Bos taurus (Bovine) protein is Charged multivesicular body protein 2b (CHMP2B).